A 341-amino-acid chain; its full sequence is Ribosomal RNA small subunit methyltransferase H (341 aa).

Residues 47-49 (GGY), Asp-64, Phe-91, Asp-109, and Gln-116 contribute to the S-adenosyl-L-methionine site. Residues 292-318 (VAASEDEASRNPRARSAKLRAGVRTPA) form a disordered region.

The protein belongs to the methyltransferase superfamily. RsmH family.

The protein localises to the cytoplasm. It catalyses the reaction cytidine(1402) in 16S rRNA + S-adenosyl-L-methionine = N(4)-methylcytidine(1402) in 16S rRNA + S-adenosyl-L-homocysteine + H(+). In terms of biological role, specifically methylates the N4 position of cytidine in position 1402 (C1402) of 16S rRNA. The chain is Ribosomal RNA small subunit methyltransferase H from Sinorhizobium fredii (strain NBRC 101917 / NGR234).